A 273-amino-acid chain; its full sequence is Ribonuclease Z (273 aa).

5 residues coordinate Zn(2+): histidine 61, histidine 63, histidine 146, aspartate 169, and histidine 233.

It belongs to the RNase Z family. Homodimer. The cofactor is Zn(2+).

The enzyme catalyses Endonucleolytic cleavage of RNA, removing extra 3' nucleotides from tRNA precursor, generating 3' termini of tRNAs. A 3'-hydroxy group is left at the tRNA terminus and a 5'-phosphoryl group is left at the trailer molecule.. In terms of biological role, zinc phosphodiesterase, which displays some tRNA 3'-processing endonuclease activity. Probably involved in tRNA maturation, by removing a 3'-trailer from precursor tRNA. This chain is Ribonuclease Z, found in Mycobacterium tuberculosis (strain ATCC 25177 / H37Ra).